Consider the following 213-residue polypeptide: Uridine kinase (213 aa).

15–22 (GASASGKS) is a binding site for ATP.

This sequence belongs to the uridine kinase family.

Its subcellular location is the cytoplasm. The catalysed reaction is uridine + ATP = UMP + ADP + H(+). It carries out the reaction cytidine + ATP = CMP + ADP + H(+). The protein operates within pyrimidine metabolism; CTP biosynthesis via salvage pathway; CTP from cytidine: step 1/3. It functions in the pathway pyrimidine metabolism; UMP biosynthesis via salvage pathway; UMP from uridine: step 1/1. The sequence is that of Uridine kinase from Erwinia tasmaniensis (strain DSM 17950 / CFBP 7177 / CIP 109463 / NCPPB 4357 / Et1/99).